We begin with the raw amino-acid sequence, 657 residues long: Glycogen debranching enzyme (657 aa).

The active-site Nucleophile is Asp-336. The active-site Proton donor is Glu-371. A disordered region spans residues 460 to 479 (ANGEENRDGTNNNYSNNHGK).

This sequence belongs to the glycosyl hydrolase 13 family.

It carries out the reaction Hydrolysis of (1-&gt;6)-alpha-D-glucosidic linkages to branches with degrees of polymerization of three or four glucose residues in limit dextrin.. The protein operates within glycan degradation; glycogen degradation. Its function is as follows. Removes maltotriose and maltotetraose chains that are attached by 1,6-alpha-linkage to the limit dextrin main chain, generating a debranched limit dextrin. The chain is Glycogen debranching enzyme from Escherichia coli (strain SMS-3-5 / SECEC).